Consider the following 119-residue polypeptide: Large ribosomal subunit protein bL20 (119 aa).

The protein belongs to the bacterial ribosomal protein bL20 family.

Functionally, binds directly to 23S ribosomal RNA and is necessary for the in vitro assembly process of the 50S ribosomal subunit. It is not involved in the protein synthesizing functions of that subunit. In Bradyrhizobium sp. (strain ORS 278), this protein is Large ribosomal subunit protein bL20.